The following is a 251-amino-acid chain: Bidirectional sugar transporter SWEET4 (251 aa).

Over 1–12 the chain is Extracellular; the sequence is MVNATVARNIAG. Asn3 is a glycosylation site (N-linked (GlcNAc...) asparagine). One can recognise a MtN3/slv 1 domain in the interval 12–96; that stretch reads GICGNVISLF…LAIFFFFSPT (85 aa). Residues 13–33 form a helical membrane-spanning segment; sequence ICGNVISLFLFLSPIPTFITI. Residues 34–45 are Cytoplasmic-facing; that stretch reads YKKKKVEEYKAD. Residues 46-66 form a helical membrane-spanning segment; it reads PYLATVLNCALWVFYGLPMVQ. Over 67-72 the chain is Extracellular; sequence PDSLLV. The chain crosses the membrane as a helical span at residues 73 to 93; that stretch reads ITINGTGLAIELVYLAIFFFF. The Cytoplasmic segment spans residues 94 to 103; that stretch reads SPTSRKVKVG. A helical transmembrane segment spans residues 104–124; it reads LWLIGEMVFVGIVATCTLLLF. Residues 125 to 132 are Extracellular-facing; it reads HTHNQRSS. The helical transmembrane segment at 133 to 153 threads the bilayer; sequence FVGIFCVIFVSLMYIAPLTIM. The MtN3/slv 2 domain maps to 133-216; it reads FVGIFCVIFV…LILYACYYKT (84 aa). At 154-163 the chain is on the cytoplasmic side; it reads SKVIKTKSVK. A helical transmembrane segment spans residues 164–186; it reads YMPFSLSLANFLNGVVWVIYALI. The Extracellular portion of the chain corresponds to 187 to 190; sequence KFDL. The helical transmembrane segment at 191–213 threads the bilayer; that stretch reads FILIGNGLGTVSGAVQLILYACY. Residues 214 to 251 lie on the Cytoplasmic side of the membrane; the sequence is YKTTPKDDEDEEDEENLSKVNSQLQLSGNSGQAKRVSA. A disordered region spans residues 220–251; that stretch reads DDEDEEDEENLSKVNSQLQLSGNSGQAKRVSA. Residues 231-245 are compositionally biased toward polar residues; sequence SKVNSQLQLSGNSGQ.

It belongs to the SWEET sugar transporter family. Forms homooligomers and heterooligomers with SWEET8 and SWEET17.

It localises to the cell membrane. Mediates both low-affinity uptake and efflux of sugar across the plasma membrane. The protein is Bidirectional sugar transporter SWEET4 of Arabidopsis thaliana (Mouse-ear cress).